The chain runs to 844 residues: Probable serine/threonine-protein kinase DDB_G0267566 (844 aa).

2 ANK repeats span residues 335–367 (KGDT…NANI) and 371–400 (KHKV…KPFL). In terms of domain architecture, Protein kinase spans 508–773 (SELGKLIGKG…FEVFQKLKKV (266 aa)). ATP is bound by residues 514 to 522 (IGKGANGKV) and K539. The Proton acceptor role is filled by D634.

The protein belongs to the protein kinase superfamily. Ser/Thr protein kinase family.

It catalyses the reaction L-seryl-[protein] + ATP = O-phospho-L-seryl-[protein] + ADP + H(+). The enzyme catalyses L-threonyl-[protein] + ATP = O-phospho-L-threonyl-[protein] + ADP + H(+). In Dictyostelium discoideum (Social amoeba), this protein is Probable serine/threonine-protein kinase DDB_G0267566.